Here is a 609-residue protein sequence, read N- to C-terminus: Putative 4-coumarate--CoA ligase-like 8 (609 aa).

The ATP site is built by Ser-194, Ser-195, Gly-196, Thr-197, Thr-198, and Lys-202. Residues Phe-252 and Ser-256 each coordinate (E)-4-coumaroyl-AMP. Arg-274 provides a ligand contact to CoA. An SBD1 region spans residues 276-348 (SVEKTMAAVE…SCFPAVNLGQ (73 aa)). (E)-4-coumaroyl-AMP-binding residues include Gly-326, Gln-348, Thr-353, and Met-361. ATP contacts are provided by Gln-348 and Thr-353. Positions 349–450 (CYGLTETTGI…VRGPSTMRGY (102 aa)) are SBD2. ATP is bound by residues Asp-482 and Arg-497. Positions 499 and 503 each coordinate (E)-4-coumaroyl-AMP. Ala-506 contributes to the CoA binding site. Residue Lys-589 participates in ATP binding.

Belongs to the ATP-dependent AMP-binding enzyme family. It depends on Mg(2+) as a cofactor.

It catalyses the reaction (E)-4-coumarate + ATP + CoA = (E)-4-coumaroyl-CoA + AMP + diphosphate. It carries out the reaction (E)-4-coumarate + ATP + H(+) = (E)-4-coumaroyl-AMP + diphosphate. The catalysed reaction is (E)-4-coumaroyl-AMP + CoA = (E)-4-coumaroyl-CoA + AMP + H(+). Functionally, carboxylate--CoA ligase that may use 4-coumarate as substrate. Follows a two-step reaction mechanism, wherein the carboxylate substrate first undergoes adenylation by ATP, followed by a thioesterification in the presence of CoA to yield the final CoA thioester. In Oryza sativa subsp. japonica (Rice), this protein is Putative 4-coumarate--CoA ligase-like 8 (4CLL8).